We begin with the raw amino-acid sequence, 260 residues long: Carbonic anhydrase 3 (260 aa).

Ala2 carries the post-translational modification N-acetylalanine. One can recognise an Alpha-carbonic anhydrase domain in the interval 3-259 (KEWGYASHNG…INNRVVRASF (257 aa)). Ser29, Ser43, Ser48, Ser50, and Ser55 each carry phosphoserine. The segment at 64–67 (KTCR) is involved in proton transfer. Residue Thr73 is modified to Phosphothreonine. 3 residues coordinate Zn(2+): His94, His96, and His119. Tyr127 carries the phosphotyrosine modification. Phosphothreonine is present on residues Thr129 and Thr176. S-glutathionyl cysteine is present on residues Cys182 and Cys187. 198-199 (TT) contributes to the substrate binding site. Phosphothreonine is present on Thr216. Ser219 carries the phosphoserine modification.

It belongs to the alpha-carbonic anhydrase family. Requires Zn(2+) as cofactor. In terms of processing, S-thiolated both by thiol-disulfide exchange with glutathione disulfide and by oxyradical-initiated S-thiolation with reduced glutathione. Post-translationally, S-glutathionylated in hepatocytes under oxidative stress. Muscle specific.

It localises to the cytoplasm. The enzyme catalyses hydrogencarbonate + H(+) = CO2 + H2O. Its activity is regulated as follows. Activated by proton donors such as imidazole and the dipeptide histidylhistidine. Inhibited by coumarins and sulfonamide derivatives such as acetazolamide. Reversible hydration of carbon dioxide. This chain is Carbonic anhydrase 3, found in Homo sapiens (Human).